The following is a 249-amino-acid chain: Low affinity immunoglobulin gamma Fc region receptor III-A (249 aa).

The signal sequence occupies residues 1–20; the sequence is MWYLLLPTALLLTVSSGVGA. Residues 21–203 lie on the Extracellular side of the membrane; it reads GLQKAVVNLD…SPSSFLPWHQ (183 aa). Ig-like C2-type domains follow at residues 31–103 and 117–188; these read PEWV…QLDV and FQEG…LQIS. Disulfide bonds link Cys46–Cys88 and Cys127–Cys171. Asn55 and Asn62 each carry an N-linked (GlcNAc...) asparagine glycan. N-linked (GlcNAc...) asparagine glycosylation is present at Asn179. A helical transmembrane segment spans residues 204-224; it reads ITFCLLIGLLFAIDTVLYFSV. The Cytoplasmic portion of the chain corresponds to 225–249; the sequence is QRSLQSSVAVYEEPKLHWSKEPQDK. Tyr235 carries the post-translational modification Phosphotyrosine.

Forms a heterooligomeric complex with ITAM-containing signaling subunits FCER1G. Interacts (via transmembrane domain) with signaling subunits; this interaction is a prerequisite for receptor complex expression on the cell surface and intracellular signal transduction. Binds the Fc region of antigen-complexed IgG. N-glycosylated. Post-translationally, phosphorylated following receptor ligation.

The protein localises to the cell membrane. Receptor for the invariable Fc fragment of immunoglobulin gamma (IgG). Binds with intermediate affinity to both IgG2a and IgG2b. Can bind to IgG2a and IgG2b monomers. Does not display binding to IgG1 or IgG3. Recognizes neutralizing virus-specific IgGs displayed on the cell surface of infected cells and triggers antibody-dependent cellular cytotoxicity (ADCC). Confers protection to lethal influenza virus infection. On splenic dendritic cells, uptakes antigen immune complexes and efficiently divert them into MHC class I and II antigen presentation pathways to provide for superior priming of CD4-positive and CD8-positive T cell immune responses. Mediates neutrophil activation by IgG complexes redundantly with FCGR2A. Plays a role in promoting bone resorption by enhancing osteoclast differentiation following binding to IgG2a. Also acts as a receptor for the Fc region of immunoglobulin epsilon (IgE). Binds with low affinity to both the a and b allotypes of IgE. Has also been shown to bind to IgE allotype a only but not to allotype b. Binds aggregated IgE but not the monomeric form and bound monomeric IgG is readily displaced by IgE complexes. Binding to IgE promotes macrophage-mediated phagocytosis, antigen presentation to T cells, production of pro-inflammatory cytokines and the late phase of cutaneous allergic reactions. Mediates enhanced ADCC in response to afucosylated IgGs. The protein is Low affinity immunoglobulin gamma Fc region receptor III-A of Rattus norvegicus (Rat).